Here is a 407-residue protein sequence, read N- to C-terminus: MTYPNLLDRFLTYVKVNTRSDEHSTTTPSTQSQVDFATNVLIPEMKRVGLQNVYYLPNGFAIGTLPANDPSLTRKIGFISHMDTADFNAEGVNPQVIENYDGGVIELGNSGFKLDPADFKSLEKYPGQTLITTDGTSLLGADDKSGIAEIMTTIEYLTAHPEIKHCEIRVGFGPDEEIGVGANKFDAEDFDVDFAYTVDGGPLGELQYETFSAAGAELHFQGRNVHPGTAKGQMVNALQLAIDFHNQLPENDRPELTEGYQGFYHLMDVTGSVEEVRASYIIRDFEKDAFEARKASMQSIADKMNEELGSDRVTLNLTDQYYNMKEVIEKDMTPITIAKAVMEDLGITPIIEPIRGGTDGSKISFMGIPTPNIFAGGENMHGRFEYVSLQTMERAVDTIIGIVAYKG.

H81 lines the Zn(2+) pocket. Residue D83 is part of the active site. Position 142 (D142) interacts with Zn(2+). E176 serves as the catalytic Proton acceptor. 3 residues coordinate Zn(2+): E177, D199, and H381.

This sequence belongs to the peptidase M20B family. Zn(2+) serves as cofactor.

It localises to the cytoplasm. The catalysed reaction is Release of the N-terminal residue from a tripeptide.. In terms of biological role, cleaves the N-terminal amino acid of tripeptides. This chain is Peptidase T, found in Streptococcus pneumoniae (strain JJA).